The following is a 189-amino-acid chain: GTP cyclohydrolase 1 (189 aa).

Zn(2+) is bound by residues cysteine 78, histidine 81, and cysteine 150.

The protein belongs to the GTP cyclohydrolase I family. Toroid-shaped homodecamer, composed of two pentamers of five dimers.

The enzyme catalyses GTP + H2O = 7,8-dihydroneopterin 3'-triphosphate + formate + H(+). It functions in the pathway cofactor biosynthesis; 7,8-dihydroneopterin triphosphate biosynthesis; 7,8-dihydroneopterin triphosphate from GTP: step 1/1. This chain is GTP cyclohydrolase 1, found in Listeria welshimeri serovar 6b (strain ATCC 35897 / DSM 20650 / CCUG 15529 / CIP 8149 / NCTC 11857 / SLCC 5334 / V8).